We begin with the raw amino-acid sequence, 287 residues long: ATP synthase gamma chain (287 aa).

Belongs to the ATPase gamma chain family. As to quaternary structure, F-type ATPases have 2 components, CF(1) - the catalytic core - and CF(0) - the membrane proton channel. CF(1) has five subunits: alpha(3), beta(3), gamma(1), delta(1), epsilon(1). CF(0) has three main subunits: a, b and c.

It is found in the cell membrane. Its function is as follows. Produces ATP from ADP in the presence of a proton gradient across the membrane. The gamma chain is believed to be important in regulating ATPase activity and the flow of protons through the CF(0) complex. The protein is ATP synthase gamma chain of Wolbachia sp. subsp. Drosophila simulans (strain wRi).